The sequence spans 504 residues: Sperm motility kinase 3A (504 aa).

One can recognise a Protein kinase domain in the interval 28 to 276 (YVMLETIGHG…VAEVMVHPWV (249 aa)). ATP is bound by residues 34-42 (IGHGGCATV) and K57. The active-site Proton acceptor is the D147. Positions 294–334 (KPDPAIVKAMGHIGFQAQDIEDSLRQRKFNQTMASYCLLKK) constitute a UBA domain. Disordered regions lie at residues 389–421 (VCGKSTSKKRDRRVSWPSVLGRPRHTAPTMDHT) and 441–468 (NSSEESTQGHTRASAADKPVHSRGWPRG). Polar residues predominate over residues 441 to 451 (NSSEESTQGHT).

This sequence belongs to the protein kinase superfamily. CAMK Ser/Thr protein kinase family. Smok subfamily. In terms of tissue distribution, testis-specific. Expressed in the testis from 22 days postpartum (22 dpp).

The enzyme catalyses L-seryl-[protein] + ATP = O-phospho-L-seryl-[protein] + ADP + H(+). It carries out the reaction L-threonyl-[protein] + ATP = O-phospho-L-threonyl-[protein] + ADP + H(+). Functionally, may play a role in sperm motility, especially in the regulation of flagellar function. This is Sperm motility kinase 3A from Mus musculus (Mouse).